A 91-amino-acid chain; its full sequence is Putative regulatory protein Tlet_1629 (91 aa).

It belongs to the RemA family.

This is Putative regulatory protein Tlet_1629 from Pseudothermotoga lettingae (strain ATCC BAA-301 / DSM 14385 / NBRC 107922 / TMO) (Thermotoga lettingae).